Here is a 574-residue protein sequence, read N- to C-terminus: Septation ring formation regulator EzrA (574 aa).

At 1–7 (MSSGIIL) the chain is on the extracellular side. A helical membrane pass occupies residues 8–26 (LIVAIVLLVIIAYLVGVII). At 27–574 (RKRNDSLITS…YEKTREHIRF (548 aa)) the chain is on the cytoplasmic side. Coiled coils occupy residues 102–141 (NFIRAKHEINSVESQLNLVEEDIASIREALNILKEQEEKN), 274–350 (ELVT…ETES), and 459–520 (QLEA…SFEA).

It belongs to the EzrA family.

It localises to the cell membrane. Functionally, negative regulator of FtsZ ring formation; modulates the frequency and position of FtsZ ring formation. Inhibits FtsZ ring formation at polar sites. Interacts either with FtsZ or with one of its binding partners to promote depolymerization. This chain is Septation ring formation regulator EzrA, found in Streptococcus pyogenes serotype M6 (strain ATCC BAA-946 / MGAS10394).